Here is a 583-residue protein sequence, read N- to C-terminus: MLO-like protein 6 (583 aa).

Over 1–15 the chain is Extracellular; sequence MADQVKEKTLEETST. The helical transmembrane segment at 16-36 threads the bilayer; that stretch reads WAVAVVCFVLLLISIVIEKLI. Residues 37–61 are Cytoplasmic-facing; the sequence is HKIGSWFKKKNKKALYEALEKVKAE. The chain crosses the membrane as a helical span at residues 62–82; it reads LMLMGFISLLLTIGQGYISNI. Residues 83–161 are Extracellular-facing; it reads CIPKNIAASM…VSAYGMHQLH (79 aa). A helical transmembrane segment spans residues 162 to 182; the sequence is IFIFVLAVCHVIYCIVTYALG. At 183 to 284 the chain is on the cytoplasmic side; sequence KTKMRRWKKW…KYIQRSLEED (102 aa). A helical membrane pass occupies residues 285-305; the sequence is FKTIVEINPVIWFIAVLFLLT. The Extracellular portion of the chain corresponds to 306–314; that stretch reads NTNGLNSYL. A helical membrane pass occupies residues 315–335; sequence WLPFIPFIVILIVGTKLQVII. Topologically, residues 336-368 are cytoplasmic; that stretch reads TKLGLRIQEKGDVVKGTPLVQPGDHFFWFGRPR. A helical membrane pass occupies residues 369–389; the sequence is FILFLIHLVLFTNAFQLAFFV. Topologically, residues 390-411 are extracellular; sequence WSTYEFGLKNCFHESRVDVIIR. Residues 412 to 432 form a helical membrane-spanning segment; the sequence is ISIGLLVQILCSYVTLPLYAL. The Cytoplasmic portion of the chain corresponds to 433–583; it reads VTQMGSKMKP…ISLRDFSFKR (151 aa). The calmodulin-binding stretch occupies residues 447-468; sequence ERVATALKSWHHTAKKNIKHGR. Positions 461-583 are disordered; that stretch reads KKNIKHGRTS…ISLRDFSFKR (123 aa). Residues 470-484 are compositionally biased toward low complexity; the sequence is SESTTPFSSRPTTPT. A compositionally biased stretch (basic and acidic residues) spans 541 to 551; sequence RFGEEESEKKF.

The protein belongs to the MLO family.

The protein resides in the membrane. In terms of biological role, may be involved in modulation of pathogen defense and leaf cell death. Activity seems to be regulated by Ca(2+)-dependent calmodulin binding and seems not to require heterotrimeric G proteins. The sequence is that of MLO-like protein 6 (MLO6) from Arabidopsis thaliana (Mouse-ear cress).